The primary structure comprises 489 residues: Blue-light-activated histidine kinase (489 aa).

Positions 19-93 (ATDPFRAAVE…AIKSAIAAEK (75 aa)) constitute a PAS domain. Position 69 is an S-4a-FMN cysteine (cysteine 69). PAC domains follow at residues 93–147 (KPID…ELEK) and 232–281 (YSIE…NKAL). The HWE histidine kinase domain stretch occupies residues 259 to 341 (NPLVLGIVQD…LLKENWAGAT (83 aa)). Residue histidine 288 is modified to Phosphohistidine; by autocatalysis.

In terms of processing, FMN binds covalently to cysteine after exposure to blue light and this bond is spontaneously broken in the dark.

The catalysed reaction is ATP + protein L-histidine = ADP + protein N-phospho-L-histidine.. In terms of biological role, photosensitive kinase that is involved in increased bacterial virulence upon exposure to light. Once ejected from an infected animal host, sunlight acts as an environmental signal that increases the virulence of the bacterium, preparing it for infection of the next host. This photoreceptor protein is directly related to the bacterium's survival and replication within host macrophages, as it is required for optimal replication of bacteria inside macrophages. This chain is Blue-light-activated histidine kinase, found in Brucella abortus (strain 2308).